The sequence spans 557 residues: Ribonuclease J 2 (557 aa).

Positions 76, 78, 144, and 166 each coordinate Zn(2+). 366–370 lines the substrate pocket; the sequence is HASSH.

It belongs to the metallo-beta-lactamase superfamily. RNA-metabolizing metallo-beta-lactamase-like family. Bacterial RNase J subfamily. As to quaternary structure, homodimer, may be a subunit of the RNA degradosome. Requires Zn(2+) as cofactor.

It localises to the cytoplasm. Its function is as follows. An RNase that has 5'-3' exonuclease and possibly endoonuclease activity. Involved in maturation of rRNA and in some organisms also mRNA maturation and/or decay. This Staphylococcus aureus (strain MRSA252) protein is Ribonuclease J 2.